The following is a 459-amino-acid chain: Interleukin-7 receptor subunit alpha (459 aa).

Residues 1–20 (MTILGTTFGVFFSLLQVVSG) form the signal peptide. At 21 to 241 (ESGYAQNGDL…NNHSGETNPT (221 aa)) the chain is on the extracellular side. Cysteines 42 and 57 form a disulfide. N-linked (GlcNAc...) asparagine glycosylation is found at N49 and N65. Intrachain disulfides connect C74-C82 and C108-C118. The 101-residue stretch at 131–231 (APFDLSVIYR…PSYYFRTPEI (101 aa)) folds into the Fibronectin type-III domain. N-linked (GlcNAc...) asparagine glycosylation is present at N182. The WSXWS motif motif lies at 217-221 (WSEWS). A helical transmembrane segment spans residues 242-262 (LLTISILSVLSVVLLVILACV). Residues 263-459 (LWKKRIKPII…VTMSSFCQKR (197 aa)) are Cytoplasmic-facing. Positions 272-280 (IWPSLPDHK) match the Box 1 motif motif. The residue at position 282 (T282) is a Phosphothreonine; by PKC. Positions 327–357 (TVPPQLEESETQRPGGDVQSPSWPSENVVTT) are disordered. Polar residues predominate over residues 345-357 (QSPSWPSENVVTT).

The protein belongs to the type I cytokine receptor family. Type 4 subfamily. The IL7 receptor is a heterodimer of IL7R and IL2RG. The TSLP receptor is a heterodimer of CRLF2 and IL7R. Interacts with CD53. N-glycosylated IL-7Ralpha binds IL7 300-fold more tightly than the unglycosylated form. Post-translationally, ubiquitinated by MARCHF8; leading to lysosomal degradation.

The protein resides in the cell membrane. In terms of biological role, receptor for interleukin-7. Also acts as a receptor for thymic stromal lymphopoietin (TSLP). The chain is Interleukin-7 receptor subunit alpha (IL7R) from Callithrix jacchus (White-tufted-ear marmoset).